Consider the following 40-residue polypeptide: Photosystem II reaction center protein X (40 aa).

The chain crosses the membrane as a helical span at residues 10 to 30 (WSLVWGTVIVVIPVTVGLVFI).

Belongs to the PsbX family. Type 1 subfamily. PSII is composed of 1 copy each of membrane proteins PsbA, PsbB, PsbC, PsbD, PsbE, PsbF, PsbH, PsbI, PsbJ, PsbK, PsbL, PsbM, PsbT, PsbX, PsbY, PsbZ, Psb30/Ycf12, peripheral proteins PsbO, CyanoQ (PsbQ), PsbU, PsbV and a large number of cofactors. It forms dimeric complexes.

It is found in the cellular thylakoid membrane. Its function is as follows. Involved in the binding and/or turnover of quinones at the Q(B) site of photosystem II (PSII). PSII is a light-driven water plastoquinone oxidoreductase, using light energy to abstract electrons from H(2)O, generating a proton gradient subsequently used for ATP formation. In Crocosphaera subtropica (strain ATCC 51142 / BH68) (Cyanothece sp. (strain ATCC 51142)), this protein is Photosystem II reaction center protein X.